The primary structure comprises 630 residues: Protein zwilch homolog (630 aa).

Belongs to the ZWILCH family. Component of the RZZ complex composed of rod-1, czw-1 and zwl-1. Interacts with the spindly-like protein spdl-1. Interacts with NDC80 complex component ndc-80.

It localises to the cytoplasm. It is found in the cell cortex. The protein localises to the chromosome. Its subcellular location is the centromere. The protein resides in the kinetochore. It localises to the cytoskeleton. It is found in the spindle. Essential component of the mitotic checkpoint, which prevents cells from prematurely exiting mitosis. Required for chromosome segregation, the assembly of the dynein-dynactin and mdf-1-mdf-2 complexes onto kinetochores and spindle pole separation. Its function related to the spindle assembly machinery and kinetochore-microtubule attachments likely depends on its association in the mitotic RZZ complex. The RZZ complex recruits the spindly-like protein spdl-1 to kinetochores. To prevent irregular chromosome segregation, the complex also inhibits the attachment of the kinetochore-associated NDC80 complex to microtubules. The recruitment of spdl-1 to kinetochores relieves this inhibition. Required for embryonic development. This is Protein zwilch homolog (zwl-1) from Caenorhabditis elegans.